Consider the following 201-residue polypeptide: 3-isopropylmalate dehydratase small subunit (201 aa).

Belongs to the LeuD family. LeuD type 1 subfamily. Heterodimer of LeuC and LeuD.

It carries out the reaction (2R,3S)-3-isopropylmalate = (2S)-2-isopropylmalate. It functions in the pathway amino-acid biosynthesis; L-leucine biosynthesis; L-leucine from 3-methyl-2-oxobutanoate: step 2/4. In terms of biological role, catalyzes the isomerization between 2-isopropylmalate and 3-isopropylmalate, via the formation of 2-isopropylmaleate. The protein is 3-isopropylmalate dehydratase small subunit of Shigella dysenteriae serotype 1 (strain Sd197).